A 65-amino-acid polypeptide reads, in one-letter code: MSKLKGPDGRVGDRLPDGRPAISWQRRWTEGALPLWLVATAGGTAVIFVLGIFFYGSYTGIGNAG.

Residues leucine 35–tyrosine 55 traverse the membrane as a helical segment.

The protein belongs to the PsbJ family. PSII is composed of 1 copy each of membrane proteins PsbA, PsbB, PsbC, PsbD, PsbE, PsbF, PsbH, PsbI, PsbJ, PsbK, PsbL, PsbM, PsbT, PsbX, PsbY, Psb30/Ycf12, peripheral proteins PsbO, CyanoQ (PsbQ), PsbU, PsbV and a large number of cofactors. It forms dimeric complexes.

Its subcellular location is the cellular thylakoid membrane. In terms of biological role, one of the components of the core complex of photosystem II (PSII). PSII is a light-driven water:plastoquinone oxidoreductase that uses light energy to abstract electrons from H(2)O, generating O(2) and a proton gradient subsequently used for ATP formation. It consists of a core antenna complex that captures photons, and an electron transfer chain that converts photonic excitation into a charge separation. The polypeptide is Photosystem II reaction center protein J (Prochlorococcus marinus (strain NATL1A)).